The following is a 124-amino-acid chain: Large ribosomal subunit protein uL18 (124 aa).

This sequence belongs to the universal ribosomal protein uL18 family. Part of the 50S ribosomal subunit; part of the 5S rRNA/L5/L18/L25 subcomplex. Contacts the 5S and 23S rRNAs.

This is one of the proteins that bind and probably mediate the attachment of the 5S RNA into the large ribosomal subunit, where it forms part of the central protuberance. The polypeptide is Large ribosomal subunit protein uL18 (Caldicellulosiruptor saccharolyticus (strain ATCC 43494 / DSM 8903 / Tp8T 6331)).